A 510-amino-acid polypeptide reads, in one-letter code: Ribonuclease Y (510 aa).

A helical transmembrane segment spans residues 4–24 (LLWAVVALLAGLAGGAGIGVY). A KH domain is found at 200–260 (TVSTVNLPSE…VRREVARVAL (61 aa)). Residues 326-419 (VLQHSLECAL…VIAADAISGA (94 aa)) enclose the HD domain.

The protein belongs to the RNase Y family.

It localises to the cell membrane. Its function is as follows. Endoribonuclease that initiates mRNA decay. The chain is Ribonuclease Y from Chloroflexus aurantiacus (strain ATCC 29366 / DSM 635 / J-10-fl).